A 79-amino-acid chain; its full sequence is DNA-directed RNA polymerase subunit omega (79 aa).

Belongs to the RNA polymerase subunit omega family. The RNAP catalytic core consists of 2 alpha, 1 beta, 1 beta' and 1 omega subunit. When a sigma factor is associated with the core the holoenzyme is formed, which can initiate transcription.

It carries out the reaction RNA(n) + a ribonucleoside 5'-triphosphate = RNA(n+1) + diphosphate. Promotes RNA polymerase assembly. Latches the N- and C-terminal regions of the beta' subunit thereby facilitating its interaction with the beta and alpha subunits. In Bdellovibrio bacteriovorus (strain ATCC 15356 / DSM 50701 / NCIMB 9529 / HD100), this protein is DNA-directed RNA polymerase subunit omega.